A 219-amino-acid polypeptide reads, in one-letter code: ATP synthase subunit a (219 aa).

The next 6 membrane-spanning stretches (helical) occupy residues 16–36 (LSNWLSMLIPLLFMVMSFWLI), 57–79 (LLMGPASFGANILVIALFLFILF), 96–116 (LAVTLSLAVPLWISFILYTWI), 122–142 (ALAHLVPLGTPAPLMPFMVLM), 158–178 (LAANMIAGHLLLTLLGAQGTL), and 184–204 (TSIVVFSQIILLMLEFSVAII).

This sequence belongs to the ATPase A chain family. In terms of assembly, F-type ATPases have 2 components, CF(1) - the catalytic core - and CF(0) - the membrane proton channel. CF(1) has five subunits: alpha(3), beta(3), gamma(1), delta(1), epsilon(1). CF(0) has three main subunits: a, b and c.

It localises to the mitochondrion inner membrane. Functionally, mitochondrial membrane ATP synthase (F(1)F(0) ATP synthase or Complex V) produces ATP from ADP in the presence of a proton gradient across the membrane which is generated by electron transport complexes of the respiratory chain. F-type ATPases consist of two structural domains, F(1) - containing the extramembraneous catalytic core and F(0) - containing the membrane proton channel, linked together by a central stalk and a peripheral stalk. During catalysis, ATP synthesis in the catalytic domain of F(1) is coupled via a rotary mechanism of the central stalk subunits to proton translocation. Key component of the proton channel; it may play a direct role in the translocation of protons across the membrane. The protein is ATP synthase subunit a (ATP6) of Artemia franciscana (Brine shrimp).